Reading from the N-terminus, the 267-residue chain is Glucosamine-6-phosphate deaminase (267 aa).

Aspartate 71 acts as the Proton acceptor; for enolization step in catalysis. The active-site For ring-opening step is the aspartate 140. Histidine 142 (proton acceptor; for ring-opening step) is an active-site residue. Glutamate 147 (for ring-opening step) is an active-site residue.

Belongs to the glucosamine/galactosamine-6-phosphate isomerase family. Homohexamer.

The protein localises to the cytoplasm. It carries out the reaction alpha-D-glucosamine 6-phosphate + H2O = beta-D-fructose 6-phosphate + NH4(+). It participates in nucleotide-sugar biosynthesis; UDP-N-acetyl-alpha-D-glucosamine biosynthesis; alpha-D-glucosamine 6-phosphate from D-fructose 6-phosphate: step 1/1. Its function is as follows. Catalyzes the reversible conversion of alpha-D-glucosamine 6-phosphate (GlcN-6P) into beta-D-fructose 6-phosphate (Fru-6P) and ammonium ion, a regulatory reaction step in de novo uridine diphosphate-N-acetyl-alpha-D-glucosamine (UDP-GlcNAc) biosynthesis via hexosamine pathway. This Caenorhabditis elegans protein is Glucosamine-6-phosphate deaminase.